A 446-amino-acid polypeptide reads, in one-letter code: Phosphoglucosamine mutase (446 aa).

Ser-103 functions as the Phosphoserine intermediate in the catalytic mechanism. Ser-103, Asp-242, Asp-244, and Asp-246 together coordinate Mg(2+). Position 103 is a phosphoserine (Ser-103).

The protein belongs to the phosphohexose mutase family. It depends on Mg(2+) as a cofactor. Activated by phosphorylation.

It carries out the reaction alpha-D-glucosamine 1-phosphate = D-glucosamine 6-phosphate. Its function is as follows. Catalyzes the conversion of glucosamine-6-phosphate to glucosamine-1-phosphate. This Vibrio vulnificus (strain YJ016) protein is Phosphoglucosamine mutase.